Consider the following 429-residue polypeptide: Adenylosuccinate synthetase (429 aa).

GTP is bound by residues 12-18 and 40-42; these read GDEGKGK and GHT. The active-site Proton acceptor is the Asp13. Mg(2+) contacts are provided by Asp13 and Gly40. Residues 13-16, 38-41, Thr129, Arg143, Gln224, Thr239, and Arg303 each bind IMP; these read DEGK and NAGH. His41 (proton donor) is an active-site residue. A substrate-binding site is contributed by 299–305; it reads VTTGRAR. Residues Arg305, 331–333, and 413–415 each bind GTP; these read KLD and GVG.

Belongs to the adenylosuccinate synthetase family. In terms of assembly, homodimer. Requires Mg(2+) as cofactor.

The protein localises to the cytoplasm. It carries out the reaction IMP + L-aspartate + GTP = N(6)-(1,2-dicarboxyethyl)-AMP + GDP + phosphate + 2 H(+). The protein operates within purine metabolism; AMP biosynthesis via de novo pathway; AMP from IMP: step 1/2. Functionally, plays an important role in the de novo pathway of purine nucleotide biosynthesis. Catalyzes the first committed step in the biosynthesis of AMP from IMP. This Rhodococcus erythropolis (strain PR4 / NBRC 100887) protein is Adenylosuccinate synthetase.